The chain runs to 777 residues: Endonuclease MutS2 (777 aa).

Residue 328–335 (GPNTGGKT) participates in ATP binding. Residues 702 to 777 (LDLRGKRYEE…GSGATIVIFK (76 aa)) enclose the Smr domain.

This sequence belongs to the DNA mismatch repair MutS family. MutS2 subfamily. In terms of assembly, homodimer. Binds to stalled ribosomes, contacting rRNA.

Functionally, endonuclease that is involved in the suppression of homologous recombination and thus may have a key role in the control of bacterial genetic diversity. In terms of biological role, acts as a ribosome collision sensor, splitting the ribosome into its 2 subunits. Detects stalled/collided 70S ribosomes which it binds and splits by an ATP-hydrolysis driven conformational change. Acts upstream of the ribosome quality control system (RQC), a ribosome-associated complex that mediates the extraction of incompletely synthesized nascent chains from stalled ribosomes and their subsequent degradation. Probably generates substrates for RQC. This chain is Endonuclease MutS2, found in Streptococcus sanguinis (strain SK36).